The chain runs to 454 residues: Replicative DNA helicase DnaB (454 aa).

The N-terminal domain (NTD) stretch occupies residues 1–149; the sequence is MSELFSERIP…LDEADRKIME (149 aa). The interval 163 to 176 is linker helix; the sequence is KDILVQTYDNIEML. The 267-residue stretch at 179-445 folds into the SF4 helicase domain; it reads RDGEITGIPT…NKFVNLERRF (267 aa). A C-terminal domain (CTD) region spans residues 183–454; it reads ITGIPTGFTE…FDEAQIPPGA (272 aa). Residues Ser213, Gly215, Lys216, Thr217, and Ala218 each coordinate ATP. The active-site Nucleophile is Glu241. Residues Arg250 and Gln362 each coordinate ATP. SsDNA contacts are provided by Arg381, Glu382, and Gly384. Residues Lys418, Gln419, and Arg420 each coordinate ATP.

Belongs to the helicase family. DnaB subfamily. In terms of assembly, homohexamer. Interacts with DnaG primase, as DnaB(6):DnaG(3). Interacts with the N-terminus of DnaI (shown with DnaI of B.subtilis), forms a helicase DnaB(6):DnaI(6) complex. The DnaB-DnaI complex is disrupted by DnaD (DnaD and DnaI from B.subtilis). A stable complex DnaI(6):DnaB(6):DnaG(3) fragment can be isolated; DnaI and DnaG do not contact each other (DnaI in this complex is derived from B.subtilis). Forms a complex with DNA clamp loader protein tau (shown with B.subtilis HolA) tau(3):DnaB(6); a single ATP hydrolysis even is sufficient for complex formation.

It carries out the reaction Couples ATP hydrolysis with the unwinding of duplex DNA at the replication fork by translocating in the 5'-3' direction. This creates two antiparallel DNA single strands (ssDNA). The leading ssDNA polymer is the template for DNA polymerase III holoenzyme which synthesizes a continuous strand.. The enzyme catalyses ATP + H2O = ADP + phosphate + H(+). The main replicative DNA helicase, it participates in initiation and elongation during chromosome replication. Travels ahead of the DNA replisome, separating double-stranded (ds)DNA into templates for DNA synthesis. Binding of single-stranded (ss)DNA to the hexamer suggests a 2-nucleotide step size for the helicase and a hand-over-hand mechanism of DNA unwinding. Has ssDNA-stimulated ATPase activity. DnaG primase stimulates the helicase activity (the helicase direction was not determine but is probably 5'-3'). Loaded onto DNA by helicase loader DnaI (shown with DnaI of B.subtilis); ATP-binding enhances loading and subsequent ATP hydrolysis dissociates the complex, leaving helicase on the DNA. Binds ssDNA and less well dsDNA, in the presence of ADPNP (probably 5'-adenylyl beta, gamma-imidodiphosphate, but not ATP) binding to both DNAs is improved. This Geobacillus stearothermophilus (Bacillus stearothermophilus) protein is Replicative DNA helicase DnaB.